We begin with the raw amino-acid sequence, 413 residues long: Glucose-1-phosphatase (413 aa).

The first 22 residues, M1–A22, serve as a signal peptide directing secretion. A substrate-binding site is contributed by R39. The Nucleophile role is filled by H40. The substrate site is built by R43, R116, and E218. D312 functions as the Proton donor in the catalytic mechanism.

It belongs to the histidine acid phosphatase family. Homodimer.

The protein localises to the periplasm. It catalyses the reaction alpha-D-glucose 1-phosphate + H2O = D-glucose + phosphate. The sequence is that of Glucose-1-phosphatase (agp) from Salmonella typhimurium (strain LT2 / SGSC1412 / ATCC 700720).